The primary structure comprises 134 residues: Early E3B 14.5 kDa protein (134 aa).

An N-terminal signal peptide occupies residues Met-1–Thr-21. Residues Tyr-54–Phe-78 traverse the membrane as a helical segment.

The protein belongs to the adenoviridae E3_14 family. In terms of processing, phosphorylated on serine; O-glycosylated, but not N-glycosylated.

Its subcellular location is the host membrane. Down-regulates the EGF receptor and prevents cytolysis by TNF. The chain is Early E3B 14.5 kDa protein from Homo sapiens (Human).